Consider the following 301-residue polypeptide: Mitochondrial carnitine/acylcarnitine carrier protein (301 aa).

An N-acetylalanine modification is found at alanine 2. Topologically, residues 2–12 (ADQPKPISPLK) are cytoplasmic. 3 Solcar repeats span residues 8–99 (ISPL…GKKL), 108–196 (LSYP…LKNI), and 207–293 (LSAP…AMKF). A helical transmembrane segment spans residues 13–31 (NLLAGGFGGVCLVFVGHPL). Residues 32 to 73 (DTVKVRLQTQPPSLPGQPPMYSGTFDCFRKTLFREGITGLYR) are Mitochondrial matrix-facing. Residues 74–93 (GMAAPIIGVTPMFAVCFFGF) form a helical membrane-spanning segment. The Cytoplasmic portion of the chain corresponds to 94–112 (GLGKKLQQKHPEDVLSYPQ). A helical membrane pass occupies residues 113 to 131 (LFAAGMLSGVFTTGIMTPG). Over 132 to 170 (ERIKCLLQIQASSGESKYTGTLDCAKKLYQEFGIRGIYK) the chain is Mitochondrial matrix. 2 positions are modified to N6-acetyllysine: lysine 148 and lysine 157. Position 170 is an N6-acetyllysine; alternate (lysine 170). Position 170 is an N6-succinyllysine; alternate (lysine 170). Residues 171–190 (GTVLTLMRDVPASGMYFMTY) traverse the membrane as a helical segment. The Cytoplasmic segment spans residues 191-211 (EWLKNIFTPEGKRVSELSAPR). Residues 212–230 (ILVAGGIAGIFNWAVAIPP) form a helical membrane-spanning segment. Residues 231-267 (DVLKSRFQTAPPGKYPNGFRDVLRELIRDEGVTSLYK) lie on the Mitochondrial matrix side of the membrane. A helical transmembrane segment spans residues 268-287 (GFNAVMIRAFPANAACFLGF). The Cytoplasmic segment spans residues 288 to 301 (EVAMKFLNWATPNL).

This sequence belongs to the mitochondrial carrier (TC 2.A.29) family.

It localises to the mitochondrion inner membrane. It carries out the reaction O-acetyl-(R)-carnitine(in) + (R)-carnitine(out) = O-acetyl-(R)-carnitine(out) + (R)-carnitine(in). It catalyses the reaction an O-acyl-(R)-carnitine(in) + (R)-carnitine(out) = an O-acyl-(R)-carnitine(out) + (R)-carnitine(in). The enzyme catalyses O-propanoyl-(R)-carnitine(in) + (R)-carnitine(out) = O-propanoyl-(R)-carnitine(out) + (R)-carnitine(in). The catalysed reaction is O-hexadecanoyl-(R)-carnitine(in) + (R)-carnitine(out) = O-hexadecanoyl-(R)-carnitine(out) + (R)-carnitine(in). It carries out the reaction O-octanoyl-(R)-carnitine(in) + (R)-carnitine(out) = O-octanoyl-(R)-carnitine(out) + (R)-carnitine(in). It catalyses the reaction (R)-carnitine(in) = (R)-carnitine(out). Functionally, mediates the electroneutral exchange of acylcarnitines (O-acyl-(R)-carnitine or L-acylcarnitine) of different acyl chain lengths (ranging from O-acetyl-(R)-carnitine to long-chain O-acyl-(R)-carnitines) with free carnitine ((R)-carnitine or L-carnitine) across the mitochondrial inner membrane, via a ping-pong mechanism. Key player in the mitochondrial oxidation pathway, it translocates the fatty acids in the form of acylcarnitines into the mitochondrial matrix, where the carnitine palmitoyltransferase 2 (CPT-2) activates them to undergo fatty acid beta-oxidation. Catalyzes the unidirectional transport (uniport) of carnitine at lower rates than the antiport (exchange). The chain is Mitochondrial carnitine/acylcarnitine carrier protein from Homo sapiens (Human).